Reading from the N-terminus, the 453-residue chain is tRNA modification GTPase MnmE (453 aa).

Residues Arg-28, Glu-86, and Lys-125 each coordinate (6S)-5-formyl-5,6,7,8-tetrahydrofolate. The region spanning 221 to 375 (GIKIAIVGEP…LIKYLEETSL (155 aa)) is the TrmE-type G domain. Asn-231 contributes to the K(+) binding site. Residues 231 to 236 (NAGKSS), 250 to 256 (TNIPGTT), and 276 to 279 (DTAG) contribute to the GTP site. Ser-235 provides a ligand contact to Mg(2+). The K(+) site is built by Thr-250, Ile-252, and Thr-255. Thr-256 provides a ligand contact to Mg(2+). Lys-453 contacts (6S)-5-formyl-5,6,7,8-tetrahydrofolate.

The protein belongs to the TRAFAC class TrmE-Era-EngA-EngB-Septin-like GTPase superfamily. TrmE GTPase family. As to quaternary structure, homodimer. Heterotetramer of two MnmE and two MnmG subunits. K(+) is required as a cofactor.

Its subcellular location is the cytoplasm. Its function is as follows. Exhibits a very high intrinsic GTPase hydrolysis rate. Involved in the addition of a carboxymethylaminomethyl (cmnm) group at the wobble position (U34) of certain tRNAs, forming tRNA-cmnm(5)s(2)U34. The polypeptide is tRNA modification GTPase MnmE (Mycoplasmoides gallisepticum (strain R(low / passage 15 / clone 2)) (Mycoplasma gallisepticum)).